Consider the following 541-residue polypeptide: Malate synthase (541 aa).

Arg-169 serves as the catalytic Proton acceptor. The active-site Proton donor is the Asp-454.

The protein belongs to the malate synthase family.

It localises to the cytoplasm. The catalysed reaction is glyoxylate + acetyl-CoA + H2O = (S)-malate + CoA + H(+). The protein operates within carbohydrate metabolism; glyoxylate cycle; (S)-malate from isocitrate: step 2/2. The polypeptide is Malate synthase (aceB) (Streptomyces clavuligerus).